Here is a 564-residue protein sequence, read N- to C-terminus: H/ACA ribonucleoprotein complex non-core subunit NAF1 (564 aa).

Disordered regions lie at residues methionine 1–lysine 29, leucine 108–glycine 218, aspartate 238–glycine 264, alanine 387–tyrosine 489, and proline 538–serine 564. Low complexity predominate over residues alanine 146–serine 157. The segment covering aspartate 238 to alanine 249 has biased composition (acidic residues). Phosphothreonine is present on threonine 250. Serine 254 carries the post-translational modification Phosphoserine. The segment covering serine 388–histidine 402 has biased composition (basic and acidic residues). Serine 403 carries the post-translational modification Phosphoserine. The span at serine 426–valine 446 shows a compositional bias: low complexity. Residue threonine 427 is modified to Phosphothreonine. A Phosphoserine modification is found at serine 429. Phosphothreonine is present on threonine 432. Polar residues predominate over residues proline 468 to tyrosine 489. Positions proline 538–asparagine 553 are enriched in pro residues. Positions asparagine 554–serine 564 are enriched in polar residues.

It belongs to the NAF1 family. As to quaternary structure, during assembly of the complex, component of the box H/ACA small nucleolar ribonucleoprotein (H/ACA snoRNP) complex.

It is found in the nucleus. Functionally, RNA-binding protein required for the maturation of the box H/ACA small nucleolar ribonucleoprotein (H/ACA snoRNP) complex and ribosome biogenesis. During assembly of the H/ACA snoRNP complex it associates with the complex and dissociates during complex maturation, becoming replaced by Gar1 to yield mature H/ACA snoRNP complex. In Drosophila melanogaster (Fruit fly), this protein is H/ACA ribonucleoprotein complex non-core subunit NAF1.